Consider the following 204-residue polypeptide: Large ribosomal subunit protein eL15 (204 aa).

The tract at residues 185 to 204 (GGSRRAAWKRKNREHMHRKR) is disordered. The segment covering 190–204 (AAWKRKNREHMHRKR) has biased composition (basic residues).

Belongs to the eukaryotic ribosomal protein eL15 family.

In Drosophila melanogaster (Fruit fly), this protein is Large ribosomal subunit protein eL15 (RpL15).